Reading from the N-terminus, the 567-residue chain is MKAVIVFCLMALSIVDAAWKPLPENLKEDLIVYQVYPRSFKDSNGDGIGDIEGIKEKLDHFLEMGVDMFWLSPIYPSPMVDFGYDISNYTDVHPIFGTISDLDNLVSAAHEKGLKIILDFVPNHTSDQHEWFQLSLKNIEPYNNYYIWHPGKIVNGKRVPPTNWVGVFGGSAWSWREERQAYYLHQFAPEQPDLNYYNPVVLDDMQNVLRFWLRRGFDGFRVDALPYICEDMRFLDEPLSGETNDPNKTEYTLKIYTHDIPETYNVVRKFRDVLDEFPQPKHMLIEAYTNLSMTMKYYDYGADFPFNFAFIKNVSRDSNSSDFKKLVDNWMTYMPPSGIPNWVPGNHDQLRLVSRFGEEKARMITTMSLLLPGVAVNYYGDEIGMSDTYISWEDTQDPQGCGAGKENYQTMSRDPARTPFQWDDSVSAGFSSSSNTWLRVNENYKTVNLAAEKKDKNSFFNMFKKFASLKKSPYFKEANLNTRMLNDNVFAFSRETEDNGSLYAILNFSNEEQIVDLKAFNNVPKKLNMFYNNFNSDIKSISNNEQVKVSALGFFILISQDAKFGNF.

The N-terminal stretch at 1-17 is a signal peptide; that stretch reads MKAVIVFCLMALSIVDA. Asn88 and Asn123 each carry an N-linked (GlcNAc...) asparagine glycan. Residue Asp223 is the Nucleophile of the active site. Asn247 carries an N-linked (GlcNAc...) asparagine glycan. The active-site Proton donor is Glu286. N-linked (GlcNAc...) asparagine glycans are attached at residues Asn290, Asn313, Asn319, Asn499, and Asn507.

Monomer. Expressed specifically in the hypopharyngeal glands of worker bees. Also found in the brain of worker bees (at protein level).

The enzyme catalyses Hydrolysis of terminal, non-reducing (1-&gt;4)-linked alpha-D-glucose residues with release of alpha-D-glucose.. Converts sucrose in nectar to glucose and fructose. The polypeptide is Alpha-glucosidase (Apis mellifera (Honeybee)).